Here is a 445-residue protein sequence, read N- to C-terminus: Tubulin beta-4 chain (445 aa).

Residues 1 to 4 carry the MREI motif motif; that stretch reads MREI. GTP-binding residues include Gln11, Glu69, Ser138, Gly142, Thr143, Gly144, Asn204, and Asn226. Glu69 provides a ligand contact to Mg(2+). Positions 425–445 are disordered; it reads YQDATAEEEGEFEEGEEEENA. Residues 429–445 are compositionally biased toward acidic residues; it reads TAEEEGEFEEGEEEENA. 5-glutamyl polyglutamate is present on Glu438.

Belongs to the tubulin family. Dimer of alpha and beta chains. A typical microtubule is a hollow water-filled tube with an outer diameter of 25 nm and an inner diameter of 15 nM. Alpha-beta heterodimers associate head-to-tail to form protofilaments running lengthwise along the microtubule wall with the beta-tubulin subunit facing the microtubule plus end conferring a structural polarity. Microtubules usually have 13 protofilaments but different protofilament numbers can be found in some organisms and specialized cells. Mg(2+) is required as a cofactor. Some glutamate residues at the C-terminus are polyglycylated, resulting in polyglycine chains on the gamma-carboxyl group. Glycylation is mainly limited to tubulin incorporated into axonemes (cilia and flagella) whereas glutamylation is prevalent in neuronal cells, centrioles, axonemes, and the mitotic spindle. Both modifications can coexist on the same protein on adjacent residues, and lowering polyglycylation levels increases polyglutamylation, and reciprocally. The precise function of polyglycylation is still unclear. Post-translationally, some glutamate residues at the C-terminus are polyglutamylated, resulting in polyglutamate chains on the gamma-carboxyl group. Polyglutamylation plays a key role in microtubule severing by spastin (SPAST). SPAST preferentially recognizes and acts on microtubules decorated with short polyglutamate tails: severing activity by SPAST increases as the number of glutamates per tubulin rises from one to eight, but decreases beyond this glutamylation threshold. As to expression, preferential expression in germ cells.

The protein resides in the cytoplasm. The protein localises to the cytoskeleton. In terms of biological role, tubulin is the major constituent of microtubules, a cylinder consisting of laterally associated linear protofilaments composed of alpha- and beta-tubulin heterodimers. Microtubules grow by the addition of GTP-tubulin dimers to the microtubule end, where a stabilizing cap forms. Below the cap, tubulin dimers are in GDP-bound state, owing to GTPase activity of alpha-tubulin. This Xenopus laevis (African clawed frog) protein is Tubulin beta-4 chain (tubb4).